A 333-amino-acid polypeptide reads, in one-letter code: Probable endo-beta-1,4-glucanase B (333 aa).

The signal sequence occupies residues 1–17 (MKFRNLFFAAVAGSAVA). N-linked (GlcNAc...) asparagine glycosylation is found at Asn-37 and Asn-100. Glu-160 functions as the Proton donor in the catalytic mechanism. Glu-267 acts as the Nucleophile in catalysis.

Belongs to the glycosyl hydrolase 5 (cellulase A) family.

It is found in the secreted. The catalysed reaction is Endohydrolysis of (1-&gt;4)-beta-D-glucosidic linkages in cellulose, lichenin and cereal beta-D-glucans.. Has endoglucanase activity on substrates containing beta-1,4 glycosidic bonds, like in carboxymethylcellulose (CMC), hydroxyethylcellulose (HEC) and beta-glucan. Involved in the degradation of complex natural cellulosic substrates. The sequence is that of Probable endo-beta-1,4-glucanase B (eglB) from Aspergillus oryzae (strain ATCC 42149 / RIB 40) (Yellow koji mold).